A 153-amino-acid chain; its full sequence is Ribosome maturation factor RimP (153 aa).

Belongs to the RimP family.

The protein localises to the cytoplasm. Functionally, required for maturation of 30S ribosomal subunits. In Pelotomaculum thermopropionicum (strain DSM 13744 / JCM 10971 / SI), this protein is Ribosome maturation factor RimP.